The primary structure comprises 434 residues: Enolase (434 aa).

Gln-167 is a (2R)-2-phosphoglycerate binding site. Glu-209 functions as the Proton donor in the catalytic mechanism. Residues Asp-246, Glu-291, and Asp-318 each coordinate Mg(2+). 4 residues coordinate (2R)-2-phosphoglycerate: Lys-343, Arg-372, Ser-373, and Lys-394. Residue Lys-343 is the Proton acceptor of the active site.

The protein belongs to the enolase family. Component of the RNA degradosome, a multiprotein complex involved in RNA processing and mRNA degradation. Requires Mg(2+) as cofactor.

The protein resides in the cytoplasm. It localises to the secreted. The protein localises to the cell surface. It catalyses the reaction (2R)-2-phosphoglycerate = phosphoenolpyruvate + H2O. Its pathway is carbohydrate degradation; glycolysis; pyruvate from D-glyceraldehyde 3-phosphate: step 4/5. Functionally, catalyzes the reversible conversion of 2-phosphoglycerate (2-PG) into phosphoenolpyruvate (PEP). It is essential for the degradation of carbohydrates via glycolysis. The sequence is that of Enolase from Buchnera aphidicola subsp. Acyrthosiphon pisum (strain 5A).